The sequence spans 357 residues: Sulfate/thiosulfate import ATP-binding protein CysA (357 aa).

The ABC transporter domain maps to 3-237; that stretch reads ITIQNLNKHF…PENAFVTEFL (235 aa). 35–42 provides a ligand contact to ATP; sequence GPSGCGKT.

The protein belongs to the ABC transporter superfamily. Sulfate/tungstate importer (TC 3.A.1.6) family. The complex is composed of two ATP-binding proteins (CysA), two transmembrane proteins (CysT and CysW) and a solute-binding protein (CysP).

It localises to the cell inner membrane. It catalyses the reaction sulfate(out) + ATP + H2O = sulfate(in) + ADP + phosphate + H(+). The catalysed reaction is thiosulfate(out) + ATP + H2O = thiosulfate(in) + ADP + phosphate + H(+). Its function is as follows. Part of the ABC transporter complex CysAWTP involved in sulfate/thiosulfate import. Responsible for energy coupling to the transport system. The protein is Sulfate/thiosulfate import ATP-binding protein CysA of Neisseria meningitidis serogroup A / serotype 4A (strain DSM 15465 / Z2491).